Consider the following 456-residue polypeptide: Protein translocase subunit SecY (456 aa).

Topologically, residues 1–21 (MEQLKEKFEPLFSVLPQVKSP) are cytoplasmic. The helical transmembrane segment at 22 to 48 (GYRVPFREKLKWTGIILVLYFFLAQIP) threads the bilayer. The Extracellular segment spans residues 49–59 (LYGLSANAVDQ). An intramembrane region (helical) is located at residues 60 to 67 (FAQFRAVL). Residues 60-88 (FAQFRAVLAGNFGSILTLGIGPIVSASII) form a discontinuously helical membrane-spanning segment. Residues 68-79 (AGNFGSILTLGI) lie within the membrane without spanning it. The helical intramembrane region spans 80-88 (GPIVSASII). The Cytoplasmic segment spans residues 89 to 109 (LQLLVGGKILKLDLSRHEDKA). A helical membrane pass occupies residues 110-134 (FFQGLQKLLAIVFTFFEALIFVLTG). At 135–141 (SLAPSAP) the chain is on the extracellular side. A helical transmembrane segment spans residues 142 to 166 (QFVWVLILQLTIGGILIIFLDEVVS). Residues 167-172 (KWGFGS) are Cytoplasmic-facing. A helical transmembrane segment spans residues 173–191 (GVGLFIAAGVSQEIIVGAF). The Extracellular segment spans residues 192-224 (NPLSAPTQPGVPAGRITGFLYLLFTGQSPDFQY). The helical transmembrane segment at 225-246 (YVLPVLALIAVFLVVVYAESMR) threads the bilayer. Over 247 to 275 (VEIPISMGGGKRLSRGAVGKYPLRFIYAS) the chain is Cytoplasmic. A helical membrane pass occupies residues 276–297 (NMPVILTSALLLNVQLLANVFQ). Over 298-334 (KLGYPILGTVSNGQAVDGLAYLLTAPRSIDALILDPF) the chain is Extracellular. The chain crosses the membrane as a helical span at residues 335–354 (RVVFYAVVFIGLCVLFAWLW). The Cytoplasmic segment spans residues 355–397 (VEISNIGPRHVARQLYQMGMQIPGFRSSRGQFEKILKRYIPTI). A helical transmembrane segment spans residues 398-416 (TILGGAFVGLLAFVADLTG). Residues 417 to 419 (SLG) lie on the Extracellular side of the membrane. A helical membrane pass occupies residues 420–434 (GGTGVLLTVGIVYRL). The Cytoplasmic portion of the chain corresponds to 435–456 (YEEIAQEQLMDMHPILRSFLGD).

It belongs to the SecY/SEC61-alpha family. Component of the Sec protein translocase complex. Heterotrimer consisting of alpha (SecY), beta (SecG) and gamma (SecE) subunits. The heterotrimers can form oligomers, although 1 heterotrimer is thought to be able to translocate proteins. Interacts with the ribosome. May interact with SecDF, and other proteins may be involved.

The protein localises to the cell membrane. Its function is as follows. The central subunit of the protein translocation channel SecYEG. Consists of two halves formed by TMs 1-5 and 6-10. These two domains form a lateral gate at the front which open onto the bilayer between TMs 2 and 7, and are clamped together by SecE at the back. The channel is closed by both a pore ring composed of hydrophobic SecY resides and a short helix (helix 2A) on the extracellular side of the membrane which forms a plug. The plug probably moves laterally to allow the channel to open. The ring and the pore may move independently. The protein is Protein translocase subunit SecY of Methanothermobacter thermautotrophicus (strain ATCC 29096 / DSM 1053 / JCM 10044 / NBRC 100330 / Delta H) (Methanobacterium thermoautotrophicum).